A 316-amino-acid polypeptide reads, in one-letter code: NAC domain-containing protein 22 (316 aa).

The 154-residue stretch at 17–170 folds into the NAC domain; the sequence is DLPGFRFHPT…DMVLCKIYRK (154 aa). Residues 117-176 mediate DNA binding; it reads IGLKKTLVFYQGRAPRGTKTDWVMNEYRLPDYGAARAAAPPPKEDMVLCKIYRKATPLKE. Residues 229 to 260 form a disordered region; it reads QSSSSSAAPSGSSSKNGGAGAPREAKKEEADV. Low complexity predominate over residues 230–244; that stretch reads SSSSSAAPSGSSSKN.

The protein localises to the nucleus. Transcription activator that binds sequence-specific DNA motifs. Involved in stress response. Plays a positive role in drought and salt stress tolerance through the modulation of abscisic acid-mediated signaling. This chain is NAC domain-containing protein 22, found in Oryza sativa subsp. japonica (Rice).